The sequence spans 166 residues: Protein YciF (166 aa).

In terms of assembly, homodimer.

The sequence is that of Protein YciF (yciF) from Escherichia coli (strain K12).